A 293-amino-acid chain; its full sequence is Small ribosomal subunit protein uS2 (293 aa).

The disordered stretch occupies residues 219–293 (IASAKPDEPY…WATPKTEDWA (75 aa)).

The protein belongs to the universal ribosomal protein uS2 family. Component of the small ribosomal subunit. Mature ribosomes consist of a small (40S) and a large (60S) subunit. The 40S subunit contains about 33 different proteins and 1 molecule of RNA (18S). The 60S subunit contains about 49 different proteins and 3 molecules of RNA (28S, 5.8S and 5S). Interacts with ribosomal protein S21.

The protein localises to the cytoplasm. Required for the assembly and/or stability of the 40S ribosomal subunit. Required for the processing of the 20S rRNA-precursor to mature 18S rRNA in a late step of the maturation of 40S ribosomal subunits. The sequence is that of Small ribosomal subunit protein uS2 from Hydra viridissima (Green hydra).